We begin with the raw amino-acid sequence, 339 residues long: Putative methylthioribose-1-phosphate isomerase (339 aa).

Residues 43–45 (RGA), R86, and Q191 each bind substrate. D232 (proton donor) is an active-site residue. 241-242 (NK) is a binding site for substrate.

Belongs to the eIF-2B alpha/beta/delta subunits family. MtnA subfamily.

It catalyses the reaction 5-(methylsulfanyl)-alpha-D-ribose 1-phosphate = 5-(methylsulfanyl)-D-ribulose 1-phosphate. Its function is as follows. Catalyzes the interconversion of methylthioribose-1-phosphate (MTR-1-P) into methylthioribulose-1-phosphate (MTRu-1-P). The polypeptide is Putative methylthioribose-1-phosphate isomerase (Archaeoglobus fulgidus (strain ATCC 49558 / DSM 4304 / JCM 9628 / NBRC 100126 / VC-16)).